We begin with the raw amino-acid sequence, 175 residues long: Protein UPS1, mitochondrial (175 aa).

A required for mitochondrial targeting region spans residues 1 to 80 (MVLLHKSTHI…RGITETWIIE (80 aa)). The 171-residue stretch at 2–172 (VLLHKSTHIF…VIQKLEEARN (171 aa)) folds into the PRELI/MSF1 domain. Residues tyrosine 26, lysine 58, lysine 148, and asparagine 152 each contribute to the a 1,2-diacyl-sn-glycero-3-phosphate site.

This sequence belongs to the slowmo family. Interacts with MDM35. Found associated with a 170 kDa complex.

It is found in the mitochondrion inner membrane. Its subcellular location is the mitochondrion intermembrane space. Functionally, required for maintenance of normal mitochondrial morphology. Required for PCP1-dependent processing of MGM1. The UPS1:MDM35 complex mediates the transfer of phosphatidic acid (PA) between liposomes and probably functions as a PA transporter across the mitochondrion intermembrane space. Phosphatidic acid release requires dissociation of the UPS1:MDM35 complex. Phosphatidic acid import is required for cardiolipin (CL) synthesis in the mitochondrial inner membrane. With UPS2, controls the level of cardiolipin in mitochondria. Cardiolipin is a unique phospholipid with four fatty acid chains and is present mainly in the mitochondrial inner membrane where it stabilizes the electron transport chain supercomplex between complexes III and IV through direct interaction of their subunits. This chain is Protein UPS1, mitochondrial (UPS1), found in Saccharomyces cerevisiae (strain ATCC 204508 / S288c) (Baker's yeast).